A 163-amino-acid chain; its full sequence is Ribosome maturation factor RimP (163 aa).

The protein belongs to the RimP family.

The protein resides in the cytoplasm. In terms of biological role, required for maturation of 30S ribosomal subunits. This Bordetella petrii (strain ATCC BAA-461 / DSM 12804 / CCUG 43448) protein is Ribosome maturation factor RimP.